The following is a 394-amino-acid chain: Upstream-binding factor 1-like protein 1 (394 aa).

A DNA-binding region (HMG box 1) is located at residues 101–169 (PKRPLTAYLR…DFQKKMRQFK (69 aa)). Residues 167-180 (QFKKRHPVSGHPKK) show a composition bias toward basic residues. The disordered stretch occupies residues 167–197 (QFKKRHPVSGHPKKSVVPQSHPTKVPTKSQG). The segment covering 183–197 (VPQSHPTKVPTKSQG) has biased composition (polar residues). Positions 225 to 291 (RKPPMNAYHK…QYRVKLDLWL (67 aa)) form a DNA-binding region, HMG box 2. Positions 305–394 (AKATCGKRKN…SDSSSTDEDD (90 aa)) are disordered.

It localises to the cytoplasm. The protein resides in the nucleus. Functionally, essential for proliferation of the inner cell mass and trophectodermal cells in peri-implantation development. The chain is Upstream-binding factor 1-like protein 1 from Mus musculus (Mouse).